Consider the following 126-residue polypeptide: Fluoride-specific ion channel FluC (126 aa).

4 helical membrane-spanning segments follow: residues 4-24 (LLLV…TSAW), 36-56 (GTLL…TASL), 67-85 (LFLA…SFNY), and 101-121 (AYLL…TLLV). Residues Gly-75 and Thr-78 each contribute to the Na(+) site.

It belongs to the fluoride channel Fluc/FEX (TC 1.A.43) family.

The protein resides in the cell inner membrane. It catalyses the reaction fluoride(in) = fluoride(out). Na(+) is not transported, but it plays an essential structural role and its presence is essential for fluoride channel function. In terms of biological role, fluoride-specific ion channel. Important for reducing fluoride concentration in the cell, thus reducing its toxicity. This chain is Fluoride-specific ion channel FluC, found in Anaeromyxobacter dehalogenans (strain 2CP-1 / ATCC BAA-258).